The primary structure comprises 390 residues: 3-ketoacyl-CoA thiolase (390 aa).

Cysteine 95 functions as the Acyl-thioester intermediate in the catalytic mechanism. Active-site proton acceptor residues include histidine 346 and cysteine 376.

This sequence belongs to the thiolase-like superfamily. Thiolase family. Heterotetramer of two alpha chains (FadB) and two beta chains (FadA).

It localises to the cytoplasm. It carries out the reaction an acyl-CoA + acetyl-CoA = a 3-oxoacyl-CoA + CoA. It participates in lipid metabolism; fatty acid beta-oxidation. In terms of biological role, catalyzes the final step of fatty acid oxidation in which acetyl-CoA is released and the CoA ester of a fatty acid two carbons shorter is formed. This Acinetobacter baumannii (strain ATCC 17978 / DSM 105126 / CIP 53.77 / LMG 1025 / NCDC KC755 / 5377) protein is 3-ketoacyl-CoA thiolase.